Here is a 279-residue protein sequence, read N- to C-terminus: Pantothenate synthetase (279 aa).

Residue 26-33 participates in ATP binding; that stretch reads MGNLHEGH. The Proton donor role is filled by histidine 33. Residue glutamine 57 coordinates (R)-pantoate. Residue glutamine 57 participates in beta-alanine binding. Residue 144–147 coordinates ATP; sequence GKKD. Residue glutamine 150 participates in (R)-pantoate binding. Residues valine 173 and 181 to 184 each bind ATP; that span reads LSSR.

Belongs to the pantothenate synthetase family. As to quaternary structure, homodimer.

It localises to the cytoplasm. It carries out the reaction (R)-pantoate + beta-alanine + ATP = (R)-pantothenate + AMP + diphosphate + H(+). The protein operates within cofactor biosynthesis; (R)-pantothenate biosynthesis; (R)-pantothenate from (R)-pantoate and beta-alanine: step 1/1. Catalyzes the condensation of pantoate with beta-alanine in an ATP-dependent reaction via a pantoyl-adenylate intermediate. In Burkholderia cenocepacia (strain ATCC BAA-245 / DSM 16553 / LMG 16656 / NCTC 13227 / J2315 / CF5610) (Burkholderia cepacia (strain J2315)), this protein is Pantothenate synthetase.